We begin with the raw amino-acid sequence, 208 residues long: Outer-membrane lipoprotein carrier protein (208 aa).

An N-terminal signal peptide occupies residues 1–22 (MKKIFAIAALSLPLFSHFPAFA).

This sequence belongs to the LolA family. As to quaternary structure, monomer.

Its subcellular location is the periplasm. Its function is as follows. Participates in the translocation of lipoproteins from the inner membrane to the outer membrane. Only forms a complex with a lipoprotein if the residue after the N-terminal Cys is not an aspartate (The Asp acts as a targeting signal to indicate that the lipoprotein should stay in the inner membrane). The protein is Outer-membrane lipoprotein carrier protein of Shewanella halifaxensis (strain HAW-EB4).